A 362-amino-acid polypeptide reads, in one-letter code: Phosphate acyltransferase (362 aa).

The interval 343–362 is disordered; the sequence is TKKISTSTINPKTSETTKES. A compositionally biased stretch (polar residues) spans 344–356; it reads KKISTSTINPKTS.

The protein belongs to the PlsX family. Homodimer. Probably interacts with PlsY.

It is found in the cytoplasm. It carries out the reaction a fatty acyl-[ACP] + phosphate = an acyl phosphate + holo-[ACP]. The protein operates within lipid metabolism; phospholipid metabolism. In terms of biological role, catalyzes the reversible formation of acyl-phosphate (acyl-PO(4)) from acyl-[acyl-carrier-protein] (acyl-ACP). This enzyme utilizes acyl-ACP as fatty acyl donor, but not acyl-CoA. The protein is Phosphate acyltransferase of Aster yellows witches'-broom phytoplasma (strain AYWB).